We begin with the raw amino-acid sequence, 454 residues long: Maintenance of mitochondrial morphology protein 1 (454 aa).

Topologically, residues methionine 1 to glycine 117 are lumenal. Residues leucine 118–phenylalanine 138 form a helical membrane-spanning segment. Over serine 139 to tyrosine 454 the chain is Cytoplasmic. Positions lysine 144–serine 164 are disordered. The span at serine 153–serine 164 shows a compositional bias: low complexity. The SMP-LTD domain maps to proline 215–proline 427. The a 1,2-diacyl-sn-glycero-3-phosphate site is built by arginine 253, tryptophan 411, arginine 415, tryptophan 430, arginine 432, and serine 433. The interval lysine 434 to tyrosine 454 is disordered. Over residues asparagine 435–tyrosine 454 the composition is skewed to basic and acidic residues.

This sequence belongs to the MMM1 family. In terms of assembly, homodimer. Component of the ER-mitochondria encounter structure (ERMES) or MDM complex, composed of MMM1, MDM10, MDM12 and MDM34. An MMM1 homodimer associates with one molecule of MDM12 on each side in a pairwise head-to-tail manner, and the SMP-LTD domains of MMM1 and MDM12 generate a continuous hydrophobic tunnel for phospholipid trafficking.

The protein localises to the endoplasmic reticulum membrane. Its function is as follows. Component of the ERMES/MDM complex, which serves as a molecular tether to connect the endoplasmic reticulum (ER) and mitochondria. Components of this complex are involved in the control of mitochondrial shape and protein biogenesis, and function in nonvesicular lipid trafficking between the ER and mitochondria. Preferentially binds to glycerophospholipids such as phosphatidylcholoine (PC), phosphatidic acid (PA), phosphatidylglycerol (PG), and phosphatidylserine (PS), but not to phosphatidylethanolamine (PE). The MDM12-MMM1 subcomplex functions in the major beta-barrel assembly pathway that is responsible for biogenesis of all outer membrane beta-barrel proteins, and acts in a late step after the SAM complex. The MDM10-MDM12-MMM1 subcomplex further acts in the TOM40-specific pathway after the action of the MDM12-MMM1 complex. Essential for establishing and maintaining the structure of mitochondria and maintenance of mtDNA nucleoids. This chain is Maintenance of mitochondrial morphology protein 1, found in Zygosaccharomyces rouxii (strain ATCC 2623 / CBS 732 / NBRC 1130 / NCYC 568 / NRRL Y-229).